A 145-amino-acid polypeptide reads, in one-letter code: Large ribosomal subunit protein uL11 (145 aa).

This sequence belongs to the universal ribosomal protein uL11 family. Part of the ribosomal stalk of the 50S ribosomal subunit. Interacts with L10 and the large rRNA to form the base of the stalk. L10 forms an elongated spine to which L12 dimers bind in a sequential fashion forming a multimeric L10(L12)X complex. One or more lysine residues are methylated.

Forms part of the ribosomal stalk which helps the ribosome interact with GTP-bound translation factors. The chain is Large ribosomal subunit protein uL11 from Rickettsia peacockii (strain Rustic).